The following is a 329-amino-acid chain: MSASPLKVAVTGAAGQIGYSLLFRLASGSLLGPDRPIELRLLEIEPALKALEGVVMELDDCAFPLLSGVEIGSDANKIFDGANLALLVGARPRGPGMERSDLLEANGAIFTAQGKALNEVAADDIRVGVTGNPANTNALIAMTNAPDIPRERFSALTRLDHNRAISQLAAKTGVAVTDIKKMTIWGNHSATQYPDLFHAEVKGKNAAEVVNDQAWIEEYFIPTVAKRGATIIDARGASSAASAASASVDAARSWLLGTPADDWVSMAVLSDGSYGVPEGLISSFPVTTKDGNWSIVKGLEIDEFSRGRIDKTAAELADERKAVTELGLI.

Position 12–18 (12–18) interacts with NAD(+); the sequence is GAAGQIG. Arg-93 and Arg-99 together coordinate substrate. Residues Asn-106, Gln-113, and 130–132 each bind NAD(+); that span reads TGN. Substrate contacts are provided by Asn-132 and Arg-163. His-188 serves as the catalytic Proton acceptor.

Belongs to the LDH/MDH superfamily. MDH type 2 family.

It catalyses the reaction (S)-malate + NAD(+) = oxaloacetate + NADH + H(+). Its function is as follows. Catalyzes the reversible oxidation of malate to oxaloacetate. This Mycobacterium ulcerans (strain Agy99) protein is Malate dehydrogenase.